The primary structure comprises 352 residues: Heat-inducible transcription repressor HrcA (352 aa).

It belongs to the HrcA family.

Its function is as follows. Negative regulator of class I heat shock genes (grpE-dnaK-dnaJ and groELS operons). Prevents heat-shock induction of these operons. This Lactobacillus gasseri (strain ATCC 33323 / DSM 20243 / BCRC 14619 / CIP 102991 / JCM 1131 / KCTC 3163 / NCIMB 11718 / NCTC 13722 / AM63) protein is Heat-inducible transcription repressor HrcA.